The sequence spans 517 residues: Ribose import ATP-binding protein RbsA 1 (517 aa).

ABC transporter domains are found at residues leucine 11 to aspartate 251 and tyrosine 263 to threonine 507. Glycine 43–serine 50 provides a ligand contact to ATP.

The protein belongs to the ABC transporter superfamily. Ribose importer (TC 3.A.1.2.1) family. In terms of assembly, the complex is composed of an ATP-binding protein (RbsA), two transmembrane proteins (RbsC) and a solute-binding protein (RbsB).

Its subcellular location is the cell inner membrane. It catalyses the reaction D-ribose(out) + ATP + H2O = D-ribose(in) + ADP + phosphate + H(+). In terms of biological role, part of the ABC transporter complex RbsABC involved in ribose import. Responsible for energy coupling to the transport system. The protein is Ribose import ATP-binding protein RbsA 1 of Burkholderia cenocepacia (strain HI2424).